Reading from the N-terminus, the 1222-residue chain is ATP-dependent helicase/nuclease subunit A (1222 aa).

The UvrD-like helicase ATP-binding domain maps to 39-495 (QKRTAQQIEA…ILLKENFRSQ (457 aa)). 60–67 (ASAGSGKT) is an ATP binding site. A UvrD-like helicase C-terminal domain is found at 524 to 810 (QLIAGSHAQT…NLMTIHKSKG (287 aa)).

It belongs to the helicase family. AddA subfamily. In terms of assembly, heterodimer of AddA and AddB/RexB. It depends on Mg(2+) as a cofactor.

It catalyses the reaction Couples ATP hydrolysis with the unwinding of duplex DNA by translocating in the 3'-5' direction.. The catalysed reaction is ATP + H2O = ADP + phosphate + H(+). Its function is as follows. The heterodimer acts as both an ATP-dependent DNA helicase and an ATP-dependent, dual-direction single-stranded exonuclease. Recognizes the chi site generating a DNA molecule suitable for the initiation of homologous recombination. The AddA nuclease domain is required for chi fragment generation; this subunit has the helicase and 3' -&gt; 5' nuclease activities. This chain is ATP-dependent helicase/nuclease subunit A, found in Streptococcus pyogenes serotype M12 (strain MGAS9429).